We begin with the raw amino-acid sequence, 556 residues long: MRRFVYCKVVLATSLMWVLVDVFLLLYFSECNKCDDKKERSLLPALRAVISRNQEGPGEMGKAVLIPKDDQEKMKELFKINQFNLMASDLIALNRSLPDVRLEGCKTKVYPDELPNTSVVIVFHNEAWSTLLRTVYSVINRSPHYLLSEVILVDDASERDFLKLTLENYVKNLEVPVKIIRMEERSGLIRARLRGAAASKGQVITFLDAHCECTLGWLEPLLARIKEDRKTVVCPIIDVISDDTFEYMAGSDMTYGGFNWKLNFRWYPVPQREMDRRKGDRTLPVRTPTMAGGLFSIDRNYFEEIGTYDAGMDIWGGENLEMSFRIWQCGGSLEIVTCSHVGHVFRKATPYTFPGGTGHVINKNNRRLAEVWMDEFKDFFYIISPGVVKVDYGDVSVRKTLRENLKCKPFSWYLENIYPDSQIPRRYYSLGEIRNVETNQCLDNMGRKENEKVGIFNCHGMGGNQVFSYTADKEIRTDDLCLDVSRLNGPVIMLKCHHMRGNQLWEYDAERLTLRHVNSNQCLDEPSEEDKMVPTMQDCSGSRSQQWLLRNMTLGT.

Topologically, residues 1-4 (MRRF) are cytoplasmic. Residues 5–27 (VYCKVVLATSLMWVLVDVFLLLY) traverse the membrane as a helical; Signal-anchor for type II membrane protein segment. The Lumenal portion of the chain corresponds to 28 to 556 (FSECNKCDDK…WLLRNMTLGT (529 aa)). N-linked (GlcNAc...) asparagine glycans are attached at residues N94 and N116. 5 disulfide bridges follow: C105–C338, C329–C407, C441–C458, C481–C496, and C522–C539. The interval 114–224 (LPNTSVVIVF…LGWLEPLLAR (111 aa)) is catalytic subdomain A. Positions 155 and 185 each coordinate substrate. The Mn(2+) site is built by D208 and H210. Positions 284–346 (PVRTPTMAGG…TCSHVGHVFR (63 aa)) are catalytic subdomain B. W315 is a binding site for substrate. Residue H343 participates in Mn(2+) binding. Positions 346 and 351 each coordinate substrate. The 123-residue stretch at 428-550 (YSLGEIRNVE…GSRSQQWLLR (123 aa)) folds into the Ricin B-type lectin domain. An N-linked (GlcNAc...) asparagine glycan is attached at N551.

The protein belongs to the glycosyltransferase 2 family. GalNAc-T subfamily. It depends on Mn(2+) as a cofactor. As to expression, specifically expressed in neuronal cells. Expressed in fetal brain, whole adult brain, cerebral cortex and cerebellum. Not expressed in other tissues tested.

The protein localises to the golgi apparatus membrane. The catalysed reaction is L-seryl-[protein] + UDP-N-acetyl-alpha-D-galactosamine = a 3-O-[N-acetyl-alpha-D-galactosaminyl]-L-seryl-[protein] + UDP + H(+). The enzyme catalyses L-threonyl-[protein] + UDP-N-acetyl-alpha-D-galactosamine = a 3-O-[N-acetyl-alpha-D-galactosaminyl]-L-threonyl-[protein] + UDP + H(+). The protein operates within protein modification; protein glycosylation. Catalyzes the initial reaction in O-linked oligosaccharide biosynthesis, the transfer of an N-acetyl-D-galactosamine (GalNAc) residue from UDP-GalNAc to a serine or threonine residue on the protein receptor. Generates GalNAc-O-Ser/Thr structure also known as Tn antigen, which itself is immunogenic but also serves as a precursor for the synthesis of different mucin-type O-glycan core structures. Contributes to the synthesis of O-linked glycans on mucins and proteoglycans of the central nervous system. May promote neurogenesis through glycosylation and stabilization of PDPN. Functionally, can glycosylate both unmodified peptides and glycopeptides that already contain an O-linked GalNAc sugar. Transfers GalNAc to Thr-/Ser-rich tandem repeats GTTPSPVPTTSTTSAP of MUC5AC, specifically on Thr-3 of non-glycosylated MUC5AC peptide, on Thr-12 and Thr-13 of preglycosylated MUC5AC at Thr-3 (MUC5AC-3), on Thr-3 of preglycosylated MUC5AC at Thr-13 (MUC5AC-13) and on Thr-12 of preglycosylated MUC5AC at Thr-3 and Thr-13 (MUC5AC-3,13). Transfers GalNAc to three consecutive serine/threonine residues on SDC3 forming a triplet-Tn epitope expressed in Purkinje cells of the developing brain. In terms of biological role, can glycosylate both unmodified peptides and glycopeptides that already contain an O-linked GalNAc sugar. Transfers GalNAc to Thr-/Ser-rich tandem repeats GTTPSPVPTTSTTSAP of MUC5AC, specifically on Thr-3 of non-glycosylated MUC5AC peptide, on Thr-12 and Thr-13 of preglycosylated MUC5AC at Thr-3 (MUC5AC-3), on Thr-3 of preglycosylated MUC5AC at Thr-13 (MUC5AC-13) and on Thr-12 of preglycosylated MUC5AC at Thr-3 and Thr-13 (MUC5AC-3,13). In Homo sapiens (Human), this protein is Polypeptide N-acetylgalactosaminyltransferase 13 (GALNT13).